A 230-amino-acid polypeptide reads, in one-letter code: Urease accessory protein UreF (230 aa).

This sequence belongs to the UreF family. UreD, UreF and UreG form a complex that acts as a GTP-hydrolysis-dependent molecular chaperone, activating the urease apoprotein by helping to assemble the nickel containing metallocenter of UreC. The UreE protein probably delivers the nickel.

Its subcellular location is the cytoplasm. In terms of biological role, required for maturation of urease via the functional incorporation of the urease nickel metallocenter. This chain is Urease accessory protein UreF, found in Cupriavidus metallidurans (strain ATCC 43123 / DSM 2839 / NBRC 102507 / CH34) (Ralstonia metallidurans).